Reading from the N-terminus, the 256-residue chain is Alcohol dehydrogenase (256 aa).

12 to 35 (FVAGLGGIGLDTSKELVKRDLKNL) lines the NAD(+) pocket. Serine 140 contacts substrate. The active-site Proton acceptor is tyrosine 153.

It belongs to the short-chain dehydrogenases/reductases (SDR) family. As to quaternary structure, homodimer.

It carries out the reaction a primary alcohol + NAD(+) = an aldehyde + NADH + H(+). The enzyme catalyses a secondary alcohol + NAD(+) = a ketone + NADH + H(+). This is Alcohol dehydrogenase (Adh) from Drosophila teissieri (Fruit fly).